Here is an 897-residue protein sequence, read N- to C-terminus: 3'-5' exonuclease DinG (897 aa).

Residues 8–161 (VVDLETTGNQ…DEDAATTAKL (154 aa)) enclose the Exonuclease domain. Positions 241–496 (SKAVDQLGLT…KAIDQLEKQR (256 aa)) constitute a Helicase ATP-binding domain. Position 276-283 (276-283 (ASLGSGKS)) interacts with ATP. Residues 448 to 451 (DEAH) carry the DEAH box motif. A Helicase C-terminal domain is found at 703–893 (NIDEYVASIV…QFGKLLRQIQ (191 aa)).

Belongs to the helicase family. DinG subfamily. Type 2 sub-subfamily.

Functionally, 3'-5' exonuclease. This chain is 3'-5' exonuclease DinG, found in Staphylococcus aureus (strain USA300).